A 30-amino-acid polypeptide reads, in one-letter code: Conotoxin Bt12.1 (30 aa).

Contains 3 disulfide bonds. Expressed by the venom duct.

The protein localises to the secreted. The chain is Conotoxin Bt12.1 from Conus betulinus (Beech cone).